Consider the following 626-residue polypeptide: DNA-directed RNA polymerase subunit beta C-terminal section (626 aa).

Residues 287–307 (NTKSKNTGKGSKPPRASKAQN) form a disordered region.

It belongs to the RNA polymerase beta chain family. In plastids the minimal PEP RNA polymerase catalytic core is composed of four subunits: alpha, beta, beta', and beta''. When a (nuclear-encoded) sigma factor is associated with the core the holoenzyme is formed, which can initiate transcription.

The protein localises to the plastid. It is found in the chloroplast. The enzyme catalyses RNA(n) + a ribonucleoside 5'-triphosphate = RNA(n+1) + diphosphate. In terms of biological role, DNA-dependent RNA polymerase catalyzes the transcription of DNA into RNA using the four ribonucleoside triphosphates as substrates. The protein is DNA-directed RNA polymerase subunit beta C-terminal section (rpoB2) of Chlamydomonas reinhardtii (Chlamydomonas smithii).